Here is a 936-residue protein sequence, read N- to C-terminus: E3 ubiquitin-protein ligase ZNRF3 (936 aa).

The interval 1–31 (MRPRSGGRPGATGRRRRRLRRRPRGLRCSRL) is disordered. The signal sequence occupies residues 1–55 (MRPRSGGRPGATGRRRRRLRRRPRGLRCSRLPPPPPLPLLLGLLLAAAGPGAARA). The segment covering 13-27 (GRRRRRLRRRPRGLR) has biased composition (basic residues). The Extracellular segment spans residues 56–219 (KETAFVEVVL…PRQPTEYFDM (164 aa)). The helical transmembrane segment at 220-240 (GIFLAFFVVVSLVCLILLVKI) threads the bilayer. Residues 241–936 (KLKQRRSQNS…HSADSSSPGA (696 aa)) lie on the Cytoplasmic side of the membrane. The RING-type; atypical zinc finger occupies 293–334 (CAICLEKYIDGEELRVIPCTHRFHRKCVDPWLLQHHTCPHCR). Disordered regions lie at residues 608 to 693 (SEAG…SPGA), 739 to 758 (LYEG…SQGL), 849 to 875 (THSL…ATRE), and 892 to 936 (CPPE…SPGA). A compositionally biased stretch (polar residues) spans 654 to 684 (SGDQVSTCSLEMNYSSNSSLEHRGPNSSTSE). The segment covering 913–922 (ESSTTATEAA) has biased composition (low complexity).

It belongs to the ZNRF3 family. In terms of assembly, interacts with LRP6, FZD4, FZD5, FZD6 and FZD8. Interacts with RSPO1; interaction promotes indirect interaction with LGR4 and membrane clearance of ZNRF3. Also interacts with RSPO2. Interacts with LMBR1L.

The protein localises to the cell membrane. The catalysed reaction is S-ubiquitinyl-[E2 ubiquitin-conjugating enzyme]-L-cysteine + [acceptor protein]-L-lysine = [E2 ubiquitin-conjugating enzyme]-L-cysteine + N(6)-ubiquitinyl-[acceptor protein]-L-lysine.. It functions in the pathway protein modification; protein ubiquitination. Its activity is regulated as follows. Negatively regulated by R-spondin proteins such as RSPO1: interaction with RSPO1 induces the indirect association between ZNRF3 and LGR4, promoting membrane clearance of ZNRF3. In terms of biological role, E3 ubiquitin-protein ligase that acts as a negative regulator of the Wnt signaling pathway by mediating the ubiquitination and subsequent degradation of Wnt receptor complex components Frizzled and LRP6. Acts on both canonical and non-canonical Wnt signaling pathway. Acts as a tumor suppressor in the intestinal stem cell zone by inhibiting the Wnt signaling pathway, thereby restricting the size of the intestinal stem cell zone. Along with RSPO2 and RNF43, constitutes a master switch that governs limb specification. The protein is E3 ubiquitin-protein ligase ZNRF3 (ZNRF3) of Homo sapiens (Human).